The following is a 437-amino-acid chain: Ribosomal protein uS12 methylthiotransferase RimO (437 aa).

One can recognise an MTTase N-terminal domain in the interval 3-118 (KKFYITTLGC…AGKILREKFP (116 aa)). [4Fe-4S] cluster contacts are provided by cysteine 12, cysteine 48, cysteine 81, cysteine 157, cysteine 161, and cysteine 164. The region spanning 143 to 370 (NYSKPYAYVK…RDSHLEILEE (228 aa)) is the Radical SAM core domain. The TRAM domain occupies 373-437 (ESRIGRTYDA…YEYDMNGTWV (65 aa)).

The protein belongs to the methylthiotransferase family. RimO subfamily. [4Fe-4S] cluster is required as a cofactor.

The protein resides in the cytoplasm. It carries out the reaction L-aspartate(89)-[ribosomal protein uS12]-hydrogen + (sulfur carrier)-SH + AH2 + 2 S-adenosyl-L-methionine = 3-methylsulfanyl-L-aspartate(89)-[ribosomal protein uS12]-hydrogen + (sulfur carrier)-H + 5'-deoxyadenosine + L-methionine + A + S-adenosyl-L-homocysteine + 2 H(+). Functionally, catalyzes the methylthiolation of an aspartic acid residue of ribosomal protein uS12. The protein is Ribosomal protein uS12 methylthiotransferase RimO of Leptospira interrogans serogroup Icterohaemorrhagiae serovar copenhageni (strain Fiocruz L1-130).